Reading from the N-terminus, the 1215-residue chain is DNA-directed RNA polymerase subunit beta' (1215 aa).

Residues cysteine 60, cysteine 62, cysteine 75, and cysteine 78 each contribute to the Zn(2+) site. Mg(2+) is bound by residues aspartate 450, aspartate 452, and aspartate 454. Zn(2+) is bound by residues cysteine 819, cysteine 893, cysteine 900, and cysteine 903.

The protein belongs to the RNA polymerase beta' chain family. The RNAP catalytic core consists of 2 alpha, 1 beta, 1 beta' and 1 omega subunit. When a sigma factor is associated with the core the holoenzyme is formed, which can initiate transcription. It depends on Mg(2+) as a cofactor. The cofactor is Zn(2+).

The catalysed reaction is RNA(n) + a ribonucleoside 5'-triphosphate = RNA(n+1) + diphosphate. Its function is as follows. DNA-dependent RNA polymerase catalyzes the transcription of DNA into RNA using the four ribonucleoside triphosphates as substrates. The polypeptide is DNA-directed RNA polymerase subunit beta' (Levilactobacillus brevis (strain ATCC 367 / BCRC 12310 / CIP 105137 / JCM 1170 / LMG 11437 / NCIMB 947 / NCTC 947) (Lactobacillus brevis)).